The following is an 85-amino-acid chain: High affinity immunoglobulin epsilon receptor subunit gamma (85 aa).

The signal sequence occupies residues 1–18 (MIPAVVLLLLLLVEQAAA). Residues 19 to 23 (LGEPQ) are Extracellular-facing. A helical membrane pass occupies residues 24 to 44 (LCYILDAILFLYGIVLTLLYC). Residues 45–85 (RLKLQVRKAATASEKSDGIYTGLSTRTQETYETLKHEKPPQ) are Cytoplasmic-facing. Positions 53–81 (AATASEKSDGIYTGLSTRTQETYETLKHE) constitute an ITAM domain. Residue Tyr64 is modified to Phosphotyrosine. Residue Ser68 is modified to Phosphoserine. Tyr75 bears the Phosphotyrosine mark. Thr77 carries the phosphothreonine modification.

This sequence belongs to the CD3Z/FCER1G family. In terms of assembly, igE Fc receptor is a tetramer of an alpha chain, a beta chain, and two disulfide linked gamma chains. Associates with FCGR1A; forms a functional signaling complex. The signaling subunit of immunoglobulin gamma (IgG) Fc receptor complex. As a homodimer or a heterodimer of CD247 and FCER1G, associates with the ligand binding subunit FCGR3A to form a functional receptor complex. Associates with CLEC6A. Interacts with CLEC4E. Interacts (via ITAM domain) with SYK (via SH2 domains); activates SYK, enabling integrin-mediated activation of neutrophils and macrophages. Interacts with CSF2RB and recruits SYK in response to IL3 stimulation; this interaction is direct. Interacts with CD300LH; the interaction may be indirect. Interacts with CD300LD. Interacts with TARM1.

Its subcellular location is the cell membrane. Its function is as follows. Adapter protein containing an immunoreceptor tyrosine-based activation motif (ITAM) that transduces activation signals from various immunoreceptors. As a component of the high-affinity immunoglobulin E (IgE) receptor, mediates allergic inflammatory signaling in mast cells. As a constitutive component of interleukin-3 receptor complex, selectively mediates interleukin 4/IL4 production by basophils priming T-cells toward effector T-helper 2 subset. Associates with pattern recognition receptors CLEC4D and CLEC4E to form a functional signaling complex in myeloid cells. Binding of mycobacterial trehalose 6,6'-dimycolate (TDM) to this receptor complex leads to phosphorylation of ITAM, triggering activation of SYK, CARD9 and NF-kappa-B, consequently driving maturation of antigen-presenting cells and shaping antigen-specific priming of T-cells toward effector T-helper 1 and T-helper 17 cell subtypes. May function cooperatively with other activating receptors. Functionally linked to integrin beta-2/ITGB2-mediated neutrophil activation. Also involved in integrin alpha-2/ITGA2-mediated platelet activation. The protein is High affinity immunoglobulin epsilon receptor subunit gamma (FCER1G) of Bos taurus (Bovine).